The chain runs to 182 residues: Caltractin ICL1b (182 aa).

The tract at residues 1–31 (MSRRGQQPPPQQQQAPPQKNQAGKFNPAEFV) is disordered. 4 consecutive EF-hand domains span residues 38–73 (EEVLEIKEAFDLFDTDGTQSIDPKELKAAMTSLGFE), 74–109 (AKNQTIYQMISDLDTDGSGQIDFAEFLKLMTARISE), 111–146 (DSKADIQKVFNLFDSERAGVITLKDLRKVAKELGET), and 147–182 (MDDSELQEMIDRADSDGDAQVTFEDFYNIMTKKTFA). Ca(2+) is bound by residues Asp51, Asp53, Thr55, Ser57, Glu62, Asp87, Asp89, Ser91, Gln93, and Glu98.

This sequence belongs to the centrin family.

It localises to the cytoplasm. The protein localises to the cytoskeleton. Plays a fundamental role in microtubule organizing center structure and function. Component of the infraciliary lattice (ICL) and the ciliary basal bodies. In Paramecium tetraurelia, this protein is Caltractin ICL1b (Icl1b).